We begin with the raw amino-acid sequence, 142 residues long: MEVFVMSTSLGDEVIVMQSRSYSCGPAALATVLRNLGVNCTEAELAELAGTDESGTTMYGLIVAATSKGLRARGVKMELNDLRKNHIVFVKYGDTCHYTVIMSMDERNVTLADPALGRITVKREIFSRIFTGNVLVVERPCD.

The region spanning 18–137 (QSRSYSCGPA…RIFTGNVLVV (120 aa)) is the Peptidase C39 domain.

This is an uncharacterized protein from Methanothermobacter thermautotrophicus (strain ATCC 29096 / DSM 1053 / JCM 10044 / NBRC 100330 / Delta H) (Methanobacterium thermoautotrophicum).